The chain runs to 122 residues: Large ribosomal subunit protein uL14 (122 aa).

This sequence belongs to the universal ribosomal protein uL14 family. In terms of assembly, part of the 50S ribosomal subunit. Forms a cluster with proteins L3 and L19. In the 70S ribosome, L14 and L19 interact and together make contacts with the 16S rRNA in bridges B5 and B8.

Binds to 23S rRNA. Forms part of two intersubunit bridges in the 70S ribosome. This chain is Large ribosomal subunit protein uL14, found in Burkholderia multivorans (strain ATCC 17616 / 249).